The primary structure comprises 157 residues: uncharacterized protein (157 aa).

An N-acetyltransferase domain is found at 9 to 146; the sequence is LLINYKTLDE…GDFYVWHPET (138 aa).

This is an uncharacterized protein from Bacillus cereus (strain ATCC 10987 / NRS 248).